The chain runs to 97 residues: Ice-structuring protein (97 aa).

Positions 1–23 (MALSLFTVGQLIFLFWTLRITEA) are cleaved as a signal peptide. A propeptide spans 24-48 (NPDPAAKAAPAAVADPAAAAAAAVA) (removed by a dipeptidylpeptidase).

The protein belongs to the type-I AFP family. In terms of tissue distribution, detected in blood serum (at protein level).

It localises to the secreted. Its function is as follows. Contributes to protect fish blood from freezing at subzero sea water temperatures. Lowers the blood freezing point. Binds to nascent ice crystals and prevents further growth. The polypeptide is Ice-structuring protein (Myzopsetta ferruginea (Yellowtail flounder)).